Consider the following 393-residue polypeptide: Putative competence-damage inducible protein (393 aa).

It belongs to the CinA family.

The protein is Putative competence-damage inducible protein of Streptococcus suis (strain 98HAH33).